The chain runs to 131 residues: Probable histone H2A.3 (131 aa).

The disordered stretch occupies residues 1–23 (MAGRGKQLGSGAAKKSTSRSSKA). Residues 9-23 (GSGAAKKSTSRSSKA) show a composition bias toward low complexity.

This sequence belongs to the histone H2A family. In terms of assembly, the nucleosome is a histone octamer containing two molecules each of H2A, H2B, H3 and H4 assembled in one H3-H4 heterotetramer and two H2A-H2B heterodimers. The octamer wraps approximately 147 bp of DNA. Not ubiquitinated. In terms of tissue distribution, expressed in meristems and dividing cells.

The protein resides in the nucleus. Its subcellular location is the chromosome. In terms of biological role, core component of nucleosome. Nucleosomes wrap and compact DNA into chromatin, limiting DNA accessibility to the cellular machineries which require DNA as a template. Histones thereby play a central role in transcription regulation, DNA repair, DNA replication and chromosomal stability. DNA accessibility is regulated via a complex set of post-translational modifications of histones, also called histone code, and nucleosome remodeling. This is Probable histone H2A.3 from Arabidopsis thaliana (Mouse-ear cress).